A 348-amino-acid polypeptide reads, in one-letter code: Spore wall and anchoring disk complex protein EnP1 (348 aa).

An N-terminal signal peptide occupies residues 1–16 (MKLLGLLISAFGAINA). N47, N139, and N140 each carry an N-linked (GlcNAc...) asparagine glycan. The HBM1 motif lies at 193–198 (PRHGRS). The short motif at 248–256 (IRKGKDKKC) is the HBM2 element. Positions 322–327 (LKKIRG) match the HBM3 motif.

The protein resides in the spore wall. It is found in the spore. Its subcellular location is the perispore. Its function is as follows. Spore wall protein involved in the adhesion to host cells surface glycoaminoglycans (GAGs). Microsporidian spore adherence is an integral part of activation and host cell infection. This chain is Spore wall and anchoring disk complex protein EnP1 (EnP1), found in Encephalitozoon intestinalis (Microsporidian parasite).